Reading from the N-terminus, the 620-residue chain is Zinc finger protein GLIS1 (620 aa).

The disordered stretch occupies residues 108 to 132 (PLTGDLGGPSKRARPGPASTDSHEG). The C2H2-type 1 zinc finger occupies 195 to 220 (QACRWVDCCAAYEQQEELVRHIEKSH). The C2H2-type 2; atypical zinc finger occupies 229–256 (FTCFWAGCVRRYKPFNARYKLLIHMRVH). 3 C2H2-type zinc fingers span residues 262–286 (NKCM…LRSH), 292–316 (YLCQ…QRTH), and 322–346 (YACQ…VKAH). A Bipartite nuclear localization signal motif is present at residues 340 to 356 (RKHVKAHSAKEQQVRKK). Residues 414 to 515 (ASGLLPPAHD…PPLPSPQGYQ (102 aa)) form a disordered region. The segment covering 477–488 (SSQSHSPGGQPF) has biased composition (low complexity). Residues 489–510 (PTLPSKPSYPPFQSPPPPPLPS) show a composition bias toward pro residues.

Belongs to the GLI C2H2-type zinc-finger protein family. In terms of assembly, interacts with KLF4. Interacts with POU5F1 and/or POU5F1B. Interacts with SOX2.

The protein resides in the nucleus. Functionally, acts both as a repressor and an activator of transcription. Binds to the consensus sequence 5'-GACCACCCAC-3'. By controlling the expression of genes involved in cell differentiation inhibits the lineage commitment of multipotent cells. Prevents, for instance, the differentiation of multipotent mesenchymal cells into adipocyte and osteoblast. This chain is Zinc finger protein GLIS1, found in Homo sapiens (Human).